The primary structure comprises 286 residues: Cysteine-rich repeat secretory protein 57 (286 aa).

A signal peptide spans 1-20; the sequence is METTKKLSVLLCLFFTMNQA. The Extracellular portion of the chain corresponds to 21 to 265; the sequence is ISESDSDEHM…PSRSGSFSIR (245 aa). 2 Gnk2-homologous domains span residues 29-131 and 137-247; these read HMAT…DKFF and TKPN…TSNS. N-linked (GlcNAc...) asparagine glycosylation is found at Asn35, Asn40, Asn44, Asn60, Asn69, Asn90, Asn100, Asn108, Asn209, and Asn246. Residues 266–284 traverse the membrane as a helical segment; it reads GNNKILVGMILAVSVFAFL. Residues 285 to 286 lie on the Cytoplasmic side of the membrane; that stretch reads GL.

The protein belongs to the cysteine-rich repeat secretory protein family.

It is found in the membrane. The sequence is that of Cysteine-rich repeat secretory protein 57 (CRRSP57) from Arabidopsis thaliana (Mouse-ear cress).